The chain runs to 133 residues: Fatty acid-binding protein, heart (133 aa).

Alanine 2 is modified (N-acetylalanine). Residue threonine 8 is modified to Phosphothreonine. Tyrosine 20 bears the Phosphotyrosine; by Tyr-kinases mark. Phosphoserine is present on serine 23. Residue threonine 30 is modified to Phosphothreonine. Position 83 is a phosphoserine (serine 83). 127 to 129 (RTY) lines the (9Z)-octadecenoate pocket. 127–129 (RTY) lines the hexadecanoate pocket. An octadecanoate-binding site is contributed by 127–129 (RTY).

The protein belongs to the calycin superfamily. Fatty-acid binding protein (FABP) family.

The protein resides in the cytoplasm. FABPs are thought to play a role in the intracellular transport of long-chain fatty acids and their acyl-CoA esters. FABPs are important elements related to the hibernating state in mammals. This Myotis lucifugus (Little brown bat) protein is Fatty acid-binding protein, heart (FABP3).